Consider the following 360-residue polypeptide: MLVWLAEHLVKYYSGFNVFSYLTFRAIVSLLTALFISLWMGPRMIARLQKLSFGQVVRNDGPESHFSKRGTPTMGGIMILTAIVVSVLLWAYPSNPYVWCVLVVLVGYGIIGFVDDYRKVVRKDTKGLIARWKYFWMSVIALGVAFALYLAGKDTPATELVVPFFKDVMPQLGLFYVLLAYFVIVGTGNAVNLTDGLDGLAIMPTVFVAAGFALVAWATGNMNFANYLHIPYLRHAGELVIVCTAIVGAGLGFLWFNTYPAQVFMGDVGSLALGGALGIIAVLLRQEFLLVIMGGVFVVETLSVILQVGSFKLRGQRIFRMAPIHHHYELKGWPEPRVIVRFWIISLMLVLIGLATLKVR.

Helical transmembrane passes span 26–46 (AIVS…RMIA), 72–92 (PTMG…LWAY), 94–114 (SNPY…IGFV), 132–152 (WKYF…YLAG), 168–188 (VMPQ…VGTG), 199–219 (GLAI…AWAT), 236–256 (AGEL…FLWF), 263–283 (VFMG…IAVL), 288–308 (FLLV…ILQV), and 338–358 (VIVR…ATLK).

Belongs to the glycosyltransferase 4 family. MraY subfamily. It depends on Mg(2+) as a cofactor.

The protein localises to the cell inner membrane. The catalysed reaction is UDP-N-acetyl-alpha-D-muramoyl-L-alanyl-gamma-D-glutamyl-meso-2,6-diaminopimeloyl-D-alanyl-D-alanine + di-trans,octa-cis-undecaprenyl phosphate = di-trans,octa-cis-undecaprenyl diphospho-N-acetyl-alpha-D-muramoyl-L-alanyl-D-glutamyl-meso-2,6-diaminopimeloyl-D-alanyl-D-alanine + UMP. It participates in cell wall biogenesis; peptidoglycan biosynthesis. Its function is as follows. Catalyzes the initial step of the lipid cycle reactions in the biosynthesis of the cell wall peptidoglycan: transfers peptidoglycan precursor phospho-MurNAc-pentapeptide from UDP-MurNAc-pentapeptide onto the lipid carrier undecaprenyl phosphate, yielding undecaprenyl-pyrophosphoryl-MurNAc-pentapeptide, known as lipid I. In Citrobacter koseri (strain ATCC BAA-895 / CDC 4225-83 / SGSC4696), this protein is Phospho-N-acetylmuramoyl-pentapeptide-transferase.